Consider the following 370-residue polypeptide: MISYDKSLNYFSLYYRSNHLIMPDLISKREIGYIPFSGTMIRHLSFRNHREIESFVKRNTPRHLYYSSAYYIKPDEKRMEKKIWEGAELIFDLDADHIPGSDKMTYEEILLEVKKHVSRLLNYLINDFGFDDDSIKLYFSGGRGYHVHVVSDRVYSLDSDARREIGNYIKMEDFTIDNIIRASREKPESGPLKRFNEYISEIYSDENYLKRFYNGDFDRYYKSLDVYKDGKKKIDIMRENNYEKFKIVSKRDLDVLNNILNDFKDKYSAEIDEPVTTDVHRLIRFPGSLHGKTGLAVTPVNINEFDNFDPLISAVPEVFKDKYEHVYLNSDYMITMMNEKFSLNAGENKVPLYLALFLTGMKIGNFIEKK.

Residues Asp92, Asp94, and Asp272 contribute to the active site.

This sequence belongs to the eukaryotic-type primase small subunit family. In terms of assembly, heterodimer of a small subunit (PriS) and a large subunit (PriL). Mg(2+) serves as cofactor. The cofactor is Mn(2+).

Catalytic subunit of DNA primase, an RNA polymerase that catalyzes the synthesis of short RNA molecules used as primers for DNA polymerase during DNA replication. The small subunit contains the primase catalytic core and has DNA synthesis activity on its own. Binding to the large subunit stabilizes and modulates the activity, increasing the rate of DNA synthesis while decreasing the length of the DNA fragments, and conferring RNA synthesis capability. The DNA polymerase activity may enable DNA primase to also catalyze primer extension after primer synthesis. May also play a role in DNA repair. The polypeptide is DNA primase small subunit PriS (Picrophilus torridus (strain ATCC 700027 / DSM 9790 / JCM 10055 / NBRC 100828 / KAW 2/3)).